The sequence spans 144 residues: Large ribosomal subunit protein uL15 (144 aa).

The disordered stretch occupies residues 1–53 (MFLNTIKPGEGAKHAKRRVGRGIGSGLGKTAGRGHKGQKSRSGGFHKVGFEGG). Residues 21–31 (RGIGSGLGKTA) show a composition bias toward gly residues.

Belongs to the universal ribosomal protein uL15 family. Part of the 50S ribosomal subunit.

Its function is as follows. Binds to the 23S rRNA. The chain is Large ribosomal subunit protein uL15 from Laribacter hongkongensis (strain HLHK9).